We begin with the raw amino-acid sequence, 75 residues long: Putative sulfur carrier protein TsuB (75 aa).

Catalysis depends on Cys13, which acts as the Cysteine persulfide intermediate.

It belongs to the sulfur carrier protein TusA family.

Its function is as follows. Involved in thiosulfate metabolism. The protein is Putative sulfur carrier protein TsuB of Escherichia coli (strain K12).